The following is a 440-amino-acid chain: tRNA(Ile)-lysidine synthase (440 aa).

ATP is bound at residue 25–30 (SGGVDS).

Belongs to the tRNA(Ile)-lysidine synthase family.

Its subcellular location is the cytoplasm. The catalysed reaction is cytidine(34) in tRNA(Ile2) + L-lysine + ATP = lysidine(34) in tRNA(Ile2) + AMP + diphosphate + H(+). Its function is as follows. Ligates lysine onto the cytidine present at position 34 of the AUA codon-specific tRNA(Ile) that contains the anticodon CAU, in an ATP-dependent manner. Cytidine is converted to lysidine, thus changing the amino acid specificity of the tRNA from methionine to isoleucine. This is tRNA(Ile)-lysidine synthase from Vibrio cholerae serotype O1 (strain ATCC 39315 / El Tor Inaba N16961).